The primary structure comprises 144 residues: Large ribosomal subunit protein uL16 (144 aa).

The protein belongs to the universal ribosomal protein uL16 family. As to quaternary structure, part of the 50S ribosomal subunit.

Binds 23S rRNA and is also seen to make contacts with the A and possibly P site tRNAs. This Halothermothrix orenii (strain H 168 / OCM 544 / DSM 9562) protein is Large ribosomal subunit protein uL16.